The sequence spans 288 residues: NAD kinase (288 aa).

Residue Asp-73 is the Proton acceptor of the active site. Residues 73–74, Arg-78, 144–145, Asp-174, 185–190, and Ala-209 contribute to the NAD(+) site; these read DG, NE, and TAYSLS.

This sequence belongs to the NAD kinase family. It depends on a divalent metal cation as a cofactor.

It is found in the cytoplasm. It catalyses the reaction NAD(+) + ATP = ADP + NADP(+) + H(+). Its function is as follows. Involved in the regulation of the intracellular balance of NAD and NADP, and is a key enzyme in the biosynthesis of NADP. Catalyzes specifically the phosphorylation on 2'-hydroxyl of the adenosine moiety of NAD to yield NADP. This is NAD kinase from Porphyromonas gingivalis (strain ATCC BAA-308 / W83).